The following is a 271-amino-acid chain: Probable CAAX prenyl protease 2 (271 aa).

2 helical membrane-spanning segments follow: residues 3–23 and 42–62; these read VYLI…TFPV and CISV…IIGP. Active-site proton donor/acceptor residues include E126 and H160. 2 helical membrane-spanning segments follow: residues 174-194 and 236-256; these read AYIA…VFGW and IYYT…GITD.

It belongs to the peptidase U48 family.

The protein localises to the endoplasmic reticulum membrane. The enzyme catalyses Hydrolyzes the peptide bond -P2-(S-farnesyl or geranylgeranyl)C-P1'-P2'-P3'-COOH where P1' and P2' are amino acids with aliphatic sidechains and P3' is any C-terminal residue.. Functionally, protease involved in the processing of a variety of prenylated proteins containing the C-terminal CAAX motif, where C is a cysteine modified with an isoprenoid lipid, A is an aliphatic amino acid and X is any C-terminal amino acid. Proteolytically removes the C-terminal three residues of farnesylated proteins, leaving the prenylated cysteine as the new C-terminus. The polypeptide is Probable CAAX prenyl protease 2 (Schizosaccharomyces pombe (strain 972 / ATCC 24843) (Fission yeast)).